Consider the following 197-residue polypeptide: Holliday junction resolvase RecU (197 aa).

Positions 82, 84, 97, and 116 each coordinate Mg(2+).

It belongs to the RecU family. It depends on Mg(2+) as a cofactor.

Its subcellular location is the cytoplasm. It catalyses the reaction Endonucleolytic cleavage at a junction such as a reciprocal single-stranded crossover between two homologous DNA duplexes (Holliday junction).. Its function is as follows. Endonuclease that resolves Holliday junction intermediates in genetic recombination. Cleaves mobile four-strand junctions by introducing symmetrical nicks in paired strands. Promotes annealing of linear ssDNA with homologous dsDNA. Required for DNA repair, homologous recombination and chromosome segregation. This Streptococcus mutans serotype c (strain ATCC 700610 / UA159) protein is Holliday junction resolvase RecU.